Reading from the N-terminus, the 313-residue chain is GTP cyclohydrolase MptA (313 aa).

This sequence belongs to the GTP cyclohydrolase IV family. As to quaternary structure, homodimer. Fe(2+) is required as a cofactor.

It carries out the reaction GTP + H2O = 7,8-dihydroneopterin 2',3'-cyclic phosphate + formate + diphosphate + H(+). It functions in the pathway cofactor biosynthesis; 5,6,7,8-tetrahydromethanopterin biosynthesis. Its activity is regulated as follows. Inhibited by GTP concentrations greater than 0.3 mM and by 2-amino-5-formylamino-6-ribofuranosylamino-4(3H)-pyrimidinone 5'-phosphate (fapyGMP). Partial inhibition is observed when 2 mM GMP, dGTP, or 7-methyl-GTP was included along with 2 mM GTP. Functionally, converts GTP to 7,8-dihydro-D-neopterin 2',3'-cyclic phosphate, the first intermediate in the biosynthesis of coenzyme methanopterin. It is also able to utilize a variety of GTP analogs as substrates, including GDP, beta,gamma-methylene-GTP and GTP-[gamma-thio]. The protein is GTP cyclohydrolase MptA (mptA) of Methanocaldococcus jannaschii (strain ATCC 43067 / DSM 2661 / JAL-1 / JCM 10045 / NBRC 100440) (Methanococcus jannaschii).